A 446-amino-acid chain; its full sequence is Exodeoxyribonuclease 7 large subunit (446 aa).

It belongs to the XseA family. As to quaternary structure, heterooligomer composed of large and small subunits.

It is found in the cytoplasm. It carries out the reaction Exonucleolytic cleavage in either 5'- to 3'- or 3'- to 5'-direction to yield nucleoside 5'-phosphates.. Functionally, bidirectionally degrades single-stranded DNA into large acid-insoluble oligonucleotides, which are then degraded further into small acid-soluble oligonucleotides. This Streptococcus agalactiae serotype Ia (strain ATCC 27591 / A909 / CDC SS700) protein is Exodeoxyribonuclease 7 large subunit.